The chain runs to 534 residues: MKKKISQAIIKFFKNENLIIDESKLIIEKSKNFGDYSSNVALMFAKQNKIDSLKLAQTIKNQLLSENLNLEKIEIAPPGFINFFISKNEYANIVSEIIQKGENFGRYSLQKKINLEFVSANPTGFLHLGHLRGAVIGDILANILEFSGNFVFREYYINDFGSQIDRLVSSVFSRYQQIFKKFALPEEAYLGEDIIWCAQKFFQIYANKFENSSLDDLETYKIFREKSIEIFLDEIKADLANLSIKFDVFSSESELFRTEKVQKNLANLPFVYKKEEAIWLKTSKFGDQKDRVLVKKNGEFTYFSSDIAYHFEKINSNFKPDFLINIWGADHIGYVDRMKAALKTVNLNQKLDILLYQLVKLFKNGQEFKMSKRMGKTFTIKDLLELVDQDAIRYFISERSYNSLVEFDIGLAAKISLQNPLFLIQYAHARASKLLANSTIVPEKILKFEAENETILISKLKQFEEIVLKITKNYKINLLNKYLLELANLFNSFYSNSKIIGNQNQNSLLSLTKAVQIVLKNGLKLLGIKAKERI.

Residues 120–130 (ANPTGFLHLGH) carry the 'HIGH' region motif.

The protein belongs to the class-I aminoacyl-tRNA synthetase family. In terms of assembly, monomer.

It is found in the cytoplasm. The enzyme catalyses tRNA(Arg) + L-arginine + ATP = L-arginyl-tRNA(Arg) + AMP + diphosphate. In Mesomycoplasma hyopneumoniae (strain 7448) (Mycoplasma hyopneumoniae), this protein is Arginine--tRNA ligase.